The sequence spans 147 residues: Myoglobin (147 aa).

In terms of domain architecture, Globin spans 2-141 (ADHDLVLKCW…VIGDIDGYYK (140 aa)). His60 is a binding site for nitrite. His60 serves as a coordination point for O2. His89 is a binding site for heme b.

It belongs to the globin family. As to quaternary structure, monomeric.

It is found in the cytoplasm. The protein resides in the sarcoplasm. It catalyses the reaction Fe(III)-heme b-[protein] + nitric oxide + H2O = Fe(II)-heme b-[protein] + nitrite + 2 H(+). It carries out the reaction H2O2 + AH2 = A + 2 H2O. Monomeric heme protein which primary function is to store oxygen and facilitate its diffusion within muscle tissues. Reversibly binds oxygen through a pentacoordinated heme iron and enables its timely and efficient release as needed during periods of heightened demand. Depending on the oxidative conditions of tissues and cells, and in addition to its ability to bind oxygen, it also has a nitrite reductase activity whereby it regulates the production of bioactive nitric oxide. Under stress conditions, like hypoxia and anoxia, it also protects cells against reactive oxygen species thanks to its pseudoperoxidase activity. The chain is Myoglobin (mb) from Danio rerio (Zebrafish).